Here is a 219-residue protein sequence, read N- to C-terminus: ATP synthase delta chain, chloroplastic (219 aa).

The N-terminal 33 residues, 1–33, are a transit peptide targeting the chloroplast; the sequence is MLAAKSIAGPRAFKASAVRAAPKAGRRTVVVMA.

It belongs to the ATPase delta chain family. As to quaternary structure, F-type ATPases have 2 components, F(1) - the catalytic core - and F(0) - the membrane proton channel. F(1) has five subunits: alpha(3), beta(3), gamma(1), delta(1), epsilon(1). F(0) has four main subunits: a(1), b(1), b'(1) and c(10-14). The alpha and beta chains form an alternating ring which encloses part of the gamma chain. F(1) is attached to F(0) by a central stalk formed by the gamma and epsilon chains, while a peripheral stalk is formed by the delta, b and b' chains.

The protein localises to the plastid. It localises to the chloroplast thylakoid membrane. Its function is as follows. F(1)F(0) ATP synthase produces ATP from ADP in the presence of a proton or sodium gradient. F-type ATPases consist of two structural domains, F(1) containing the extramembraneous catalytic core and F(0) containing the membrane proton channel, linked together by a central stalk and a peripheral stalk. During catalysis, ATP synthesis in the catalytic domain of F(1) is coupled via a rotary mechanism of the central stalk subunits to proton translocation. Functionally, this protein seems to be part of the stalk that links CF(0) to CF(1). It either transmits conformational changes from CF(0) into CF(1) or is implicated in proton conduction. The polypeptide is ATP synthase delta chain, chloroplastic (Chlamydomonas reinhardtii (Chlamydomonas smithii)).